The chain runs to 145 residues: Large ribosomal subunit protein uL11 (145 aa).

Belongs to the universal ribosomal protein uL11 family. In terms of assembly, part of the ribosomal stalk of the 50S ribosomal subunit. Interacts with L10 and the large rRNA to form the base of the stalk. L10 forms an elongated spine to which L12 dimers bind in a sequential fashion forming a multimeric L10(L12)X complex. In terms of processing, one or more lysine residues are methylated.

Functionally, forms part of the ribosomal stalk which helps the ribosome interact with GTP-bound translation factors. The polypeptide is Large ribosomal subunit protein uL11 (Corynebacterium glutamicum (strain ATCC 13032 / DSM 20300 / JCM 1318 / BCRC 11384 / CCUG 27702 / LMG 3730 / NBRC 12168 / NCIMB 10025 / NRRL B-2784 / 534)).